The primary structure comprises 1072 residues: Carbamoyl phosphate synthase large chain (1072 aa).

Residues 1–401 (MPKRLDINTI…SLLKAVRSLE (401 aa)) are carboxyphosphate synthetic domain. Residues R129, R169, G175, G176, K208, I210, E215, G241, V242, H243, Q284, and E298 each contribute to the ATP site. The region spanning 133-327 (RTLMQDLNEP…IAKLAAKIAV (195 aa)) is the ATP-grasp 1 domain. The Mg(2+) site is built by Q284, E298, and N300. 3 residues coordinate Mn(2+): Q284, E298, and N300. The segment at 402-546 (LGIYHLELDH…YSTYADENES (145 aa)) is oligomerization domain. Residues 547 to 929 (IVTDRKSVVV…ALYKGLVASG (383 aa)) are carbamoyl phosphate synthetic domain. Positions 671 to 861 (EAALTKLGIP…MANVATKVIL (191 aa)) constitute an ATP-grasp 2 domain. The ATP site is built by R707, R746, E752, G777, V778, H779, S780, Q820, and E832. The Mg(2+) site is built by Q820, E832, and N834. Mn(2+) contacts are provided by Q820, E832, and N834. One can recognise an MGS-like domain in the interval 930–1072 (INIPTHGSVI…QTKRHEVVHA (143 aa)). The allosteric domain stretch occupies residues 930–1072 (INIPTHGSVI…QTKRHEVVHA (143 aa)).

This sequence belongs to the CarB family. As to quaternary structure, composed of two chains; the small (or glutamine) chain promotes the hydrolysis of glutamine to ammonia, which is used by the large (or ammonia) chain to synthesize carbamoyl phosphate. Tetramer of heterodimers (alpha,beta)4. Mg(2+) is required as a cofactor. Requires Mn(2+) as cofactor.

The catalysed reaction is hydrogencarbonate + L-glutamine + 2 ATP + H2O = carbamoyl phosphate + L-glutamate + 2 ADP + phosphate + 2 H(+). It carries out the reaction hydrogencarbonate + NH4(+) + 2 ATP = carbamoyl phosphate + 2 ADP + phosphate + 2 H(+). It participates in amino-acid biosynthesis; L-arginine biosynthesis; carbamoyl phosphate from bicarbonate: step 1/1. It functions in the pathway pyrimidine metabolism; UMP biosynthesis via de novo pathway; (S)-dihydroorotate from bicarbonate: step 1/3. Its function is as follows. Large subunit of the glutamine-dependent carbamoyl phosphate synthetase (CPSase). CPSase catalyzes the formation of carbamoyl phosphate from the ammonia moiety of glutamine, carbonate, and phosphate donated by ATP, constituting the first step of 2 biosynthetic pathways, one leading to arginine and/or urea and the other to pyrimidine nucleotides. The large subunit (synthetase) binds the substrates ammonia (free or transferred from glutamine from the small subunit), hydrogencarbonate and ATP and carries out an ATP-coupled ligase reaction, activating hydrogencarbonate by forming carboxy phosphate which reacts with ammonia to form carbamoyl phosphate. This chain is Carbamoyl phosphate synthase large chain, found in Bacillus cereus (strain ATCC 14579 / DSM 31 / CCUG 7414 / JCM 2152 / NBRC 15305 / NCIMB 9373 / NCTC 2599 / NRRL B-3711).